Here is a 158-residue protein sequence, read N- to C-terminus: Cytochrome c-type biogenesis protein CcmE (158 aa).

Topologically, residues 1 to 7 (MKPRHRR) are cytoplasmic. The helical; Signal-anchor for type II membrane protein transmembrane segment at 8 to 28 (LTLIALVLGGLGLSAGLALTA) threads the bilayer. The Periplasmic segment spans residues 29-158 (FQDNLVFFFT…DGHPETTTAY (130 aa)). His-123 and Tyr-127 together coordinate heme. The segment at 138–158 (RIGQGNGTPGPDGHPETTTAY) is disordered.

This sequence belongs to the CcmE/CycJ family.

It localises to the cell inner membrane. Its function is as follows. Heme chaperone required for the biogenesis of c-type cytochromes. Transiently binds heme delivered by CcmC and transfers the heme to apo-cytochromes in a process facilitated by CcmF and CcmH. The chain is Cytochrome c-type biogenesis protein CcmE from Alkalilimnicola ehrlichii (strain ATCC BAA-1101 / DSM 17681 / MLHE-1).